Here is a 213-residue protein sequence, read N- to C-terminus: Large ribosomal subunit protein uL3 (213 aa).

The interval 131–155 (GRASHGNSVSHRAHGSTGNNQDPGR) is disordered. Positions 135–152 (HGNSVSHRAHGSTGNNQD) are enriched in polar residues. An N5-methylglutamine modification is found at Gln-151.

It belongs to the universal ribosomal protein uL3 family. Part of the 50S ribosomal subunit. Forms a cluster with proteins L14 and L19. Methylated by PrmB.

One of the primary rRNA binding proteins, it binds directly near the 3'-end of the 23S rRNA, where it nucleates assembly of the 50S subunit. The chain is Large ribosomal subunit protein uL3 from Agrobacterium fabrum (strain C58 / ATCC 33970) (Agrobacterium tumefaciens (strain C58)).